Reading from the N-terminus, the 303-residue chain is tRNA pseudouridine synthase B (303 aa).

The active-site Nucleophile is the Asp-47.

Belongs to the pseudouridine synthase TruB family. Type 1 subfamily.

The catalysed reaction is uridine(55) in tRNA = pseudouridine(55) in tRNA. Its function is as follows. Responsible for synthesis of pseudouridine from uracil-55 in the psi GC loop of transfer RNAs. The sequence is that of tRNA pseudouridine synthase B from Roseobacter denitrificans (strain ATCC 33942 / OCh 114) (Erythrobacter sp. (strain OCh 114)).